Consider the following 164-residue polypeptide: Lipoprotein signal peptidase (164 aa).

Helical transmembrane passes span 12–32 (WLWL…LILQ), 70–90 (WFFA…MYRL), and 102–122 (ALII…GFVV). Catalysis depends on residues Asp-123 and Asp-141. Residues 137 to 157 (FNLADTAICVGAALIVLEGFL) form a helical membrane-spanning segment.

This sequence belongs to the peptidase A8 family.

The protein localises to the cell inner membrane. The catalysed reaction is Release of signal peptides from bacterial membrane prolipoproteins. Hydrolyzes -Xaa-Yaa-Zaa-|-(S,diacylglyceryl)Cys-, in which Xaa is hydrophobic (preferably Leu), and Yaa (Ala or Ser) and Zaa (Gly or Ala) have small, neutral side chains.. It participates in protein modification; lipoprotein biosynthesis (signal peptide cleavage). This protein specifically catalyzes the removal of signal peptides from prolipoproteins. The sequence is that of Lipoprotein signal peptidase from Shigella boydii serotype 4 (strain Sb227).